Reading from the N-terminus, the 482-residue chain is UDP-N-acetylmuramate--L-alanine ligase (482 aa).

An ATP-binding site is contributed by 122–128 (GTHGKTT).

Belongs to the MurCDEF family.

The protein resides in the cytoplasm. The enzyme catalyses UDP-N-acetyl-alpha-D-muramate + L-alanine + ATP = UDP-N-acetyl-alpha-D-muramoyl-L-alanine + ADP + phosphate + H(+). It functions in the pathway cell wall biogenesis; peptidoglycan biosynthesis. Its function is as follows. Cell wall formation. This Mycolicibacterium smegmatis (strain ATCC 700084 / mc(2)155) (Mycobacterium smegmatis) protein is UDP-N-acetylmuramate--L-alanine ligase.